A 310-amino-acid chain; its full sequence is L-lactate dehydrogenase (310 aa).

NAD(+)-binding positions include Val11, Asp32, Tyr62, and 76–77 (GV). Residues Gln79, Arg85, and 117–120 (NPVD) each bind substrate. NAD(+) contacts are provided by residues 115–117 (ATN) and Ser140. 145-148 (DTAR) lines the substrate pocket. Residues Arg150 and His165 each contribute to the beta-D-fructose 1,6-bisphosphate site. His172 (proton acceptor) is an active-site residue. Tyr218 carries the post-translational modification Phosphotyrosine. Residue Thr227 participates in substrate binding.

Belongs to the LDH/MDH superfamily. LDH family. Homotetramer.

It is found in the cytoplasm. The catalysed reaction is (S)-lactate + NAD(+) = pyruvate + NADH + H(+). It participates in fermentation; pyruvate fermentation to lactate; (S)-lactate from pyruvate: step 1/1. Its activity is regulated as follows. Activated by citrate at pH 5. Allosterically activated by fructose 1,6-bisphosphate (FBP) at pH from 5.8 to 7.2. In terms of biological role, catalyzes the conversion of lactate to pyruvate. In Thermus aquaticus, this protein is L-lactate dehydrogenase.